The following is a 390-amino-acid chain: Chorismate synthase 1 (390 aa).

NADP(+) is bound by residues Arg39 and Arg45. Positions 95-117 (EQEEKEMKRKVTKPRPGHADLNG) are disordered. Residues 132–134 (RSS), 253–254 (NA), Gly298, 313–317 (KPIPT), and Arg339 each bind FMN.

It belongs to the chorismate synthase family. In terms of assembly, homotetramer. FMNH2 serves as cofactor.

It catalyses the reaction 5-O-(1-carboxyvinyl)-3-phosphoshikimate = chorismate + phosphate. The protein operates within metabolic intermediate biosynthesis; chorismate biosynthesis; chorismate from D-erythrose 4-phosphate and phosphoenolpyruvate: step 7/7. Its function is as follows. Catalyzes the anti-1,4-elimination of the C-3 phosphate and the C-6 proR hydrogen from 5-enolpyruvylshikimate-3-phosphate (EPSP) to yield chorismate, which is the branch point compound that serves as the starting substrate for the three terminal pathways of aromatic amino acid biosynthesis. This reaction introduces a second double bond into the aromatic ring system. This chain is Chorismate synthase 1, found in Bacillus cereus (strain ZK / E33L).